The chain runs to 243 residues: Calcium-binding protein LPS1-beta (243 aa).

EF-hand domains are found at residues 15 to 49 (EVIDAMKQEFKDNYDTNKDGTVSCAELAKLMDCPE), 47 to 82 (CPEEEAQRIITGVDVNCDGRMQFDEFLLYMEGYTKE), 85 to 120 (YSSDEIKQMFDDLDKDGNGRISPDELSKGVGEISTK), 121 to 156 (LVEGMANKLIQEADKDGDGHVNMEEFVDTLVAKLPL), 157 to 189 (CFKKCFHEDFDKNGDGSLTNAEMSQLLNRNLPG), 191 to 226 (YSEELINEMISRVDLNGDGRVQFGEFLMHAQNLSKD), and 227 to 243 (DIKNQFMAIDKDKNGKI). 30 residues coordinate Ca(2+): Asp-29, Asn-31, Asp-33, Thr-35, Glu-40, Asp-60, Asn-62, Asp-64, Arg-66, Glu-71, Asp-98, Asp-100, Asn-102, Arg-104, Glu-109, Asp-134, Asp-136, Asp-138, His-140, Glu-145, Asp-167, Asn-169, Asp-171, Ser-173, Glu-178, Asp-204, Asn-206, Asp-208, Arg-210, and Glu-215.

In terms of tissue distribution, aboral ectoderm, a squamous epithelium covering the surface of the late stage embryo and larva.

Calcium-binding protein involved in larval development and metamorphosis. Likely to function as calcium buffers mediating the transport of calcium from the sea water to the blastocoel where calcium is required for skeleton formation. This Lytechinus pictus (Painted sea urchin) protein is Calcium-binding protein LPS1-beta.